A 461-amino-acid chain; its full sequence is D-phenylhydantoinase (461 aa).

Positions 59, 61, and 151 each coordinate a divalent metal cation. Lysine 151 carries the post-translational modification N6-carboxylysine. Tyrosine 156 contributes to the substrate binding site. Histidine 182 and histidine 239 together coordinate a divalent metal cation. Serine 286 serves as a coordination point for substrate. A divalent metal cation is bound at residue aspartate 313. Residue asparagine 335 coordinates substrate.

Belongs to the metallo-dependent hydrolases superfamily. Hydantoinase/dihydropyrimidinase family. Homotetramer. Requires a divalent metal cation as cofactor. Post-translationally, carboxylation allows a single lysine to coordinate two divalent metal cations.

It catalyses the reaction D-5-phenylhydantoin + H2O = N-carbamoyl-D-phenylglycine + H(+). Catalyzes the stereospecific hydrolysis of the cyclic amide bond of D-hydantoin derivatives with an aromatic side chains at the 5'-position. Has no activity on dihydropyrimidines. The physiological function is unknown. The polypeptide is D-phenylhydantoinase (Escherichia coli (strain 55989 / EAEC)).